We begin with the raw amino-acid sequence, 201 residues long: Anthranilate synthase component 2 (201 aa).

One can recognise a Glutamine amidotransferase type-1 domain in the interval 3 to 196 (NILFIDNFDS…IDWALSSTPA (194 aa)). 57 to 59 (GPG) serves as a coordination point for L-glutamine. Cysteine 84 (nucleophile; for GATase activity) is an active-site residue. L-glutamine is bound by residues glutamine 88 and 134–135 (SL). Active-site for GATase activity residues include histidine 170 and glutamate 172.

Heterotetramer consisting of two non-identical subunits: a beta subunit (TrpG) and a large alpha subunit (TrpE).

The catalysed reaction is chorismate + L-glutamine = anthranilate + pyruvate + L-glutamate + H(+). It functions in the pathway amino-acid biosynthesis; L-tryptophan biosynthesis; L-tryptophan from chorismate: step 1/5. In terms of biological role, part of a heterotetrameric complex that catalyzes the two-step biosynthesis of anthranilate, an intermediate in the biosynthesis of L-tryptophan. In the first step, the glutamine-binding beta subunit (TrpG) of anthranilate synthase (AS) provides the glutamine amidotransferase activity which generates ammonia as a substrate that, along with chorismate, is used in the second step, catalyzed by the large alpha subunit of AS (TrpE) to produce anthranilate. In the absence of TrpG, TrpE can synthesize anthranilate directly from chorismate and high concentrations of ammonia. The sequence is that of Anthranilate synthase component 2 (trpG) from Vibrio cholerae serotype O1 (strain ATCC 39315 / El Tor Inaba N16961).